A 249-amino-acid chain; its full sequence is Ribosomal RNA small subunit methyltransferase J (249 aa).

Residues 101–102, 117–118, and D171 each bind S-adenosyl-L-methionine; these read RD and ER.

The protein belongs to the methyltransferase superfamily. RsmJ family.

Its subcellular location is the cytoplasm. It catalyses the reaction guanosine(1516) in 16S rRNA + S-adenosyl-L-methionine = N(2)-methylguanosine(1516) in 16S rRNA + S-adenosyl-L-homocysteine + H(+). Its function is as follows. Specifically methylates the guanosine in position 1516 of 16S rRNA. In Tolumonas auensis (strain DSM 9187 / NBRC 110442 / TA 4), this protein is Ribosomal RNA small subunit methyltransferase J.